Reading from the N-terminus, the 373-residue chain is 4-hydroxy-3-methylbut-2-en-1-yl diphosphate synthase (flavodoxin) (373 aa).

[4Fe-4S] cluster is bound by residues Cys-270, Cys-273, Cys-305, and Glu-312.

It belongs to the IspG family. [4Fe-4S] cluster serves as cofactor.

It carries out the reaction (2E)-4-hydroxy-3-methylbut-2-enyl diphosphate + oxidized [flavodoxin] + H2O + 2 H(+) = 2-C-methyl-D-erythritol 2,4-cyclic diphosphate + reduced [flavodoxin]. It functions in the pathway isoprenoid biosynthesis; isopentenyl diphosphate biosynthesis via DXP pathway; isopentenyl diphosphate from 1-deoxy-D-xylulose 5-phosphate: step 5/6. Functionally, converts 2C-methyl-D-erythritol 2,4-cyclodiphosphate (ME-2,4cPP) into 1-hydroxy-2-methyl-2-(E)-butenyl 4-diphosphate. The protein is 4-hydroxy-3-methylbut-2-en-1-yl diphosphate synthase (flavodoxin) of Sodalis glossinidius (strain morsitans).